The sequence spans 324 residues: Proto-oncogene Mas (324 aa).

Topologically, residues 1 to 35 are extracellular; it reads MDQSNMTSFAEEKAMNTSSRNASLGTSHPPIPIVH. Asparagine 5, asparagine 16, and asparagine 21 each carry an N-linked (GlcNAc...) asparagine glycan. The chain crosses the membrane as a helical span at residues 36-60; that stretch reads WVIMSISPLGFVENGILLWFLCFRM. The Cytoplasmic portion of the chain corresponds to 61-64; the sequence is RRNP. The helical transmembrane segment at 65-86 threads the bilayer; sequence FTVYITHLSIADISLLFCIFIL. At 87 to 103 the chain is on the extracellular side; the sequence is SIDYALDYELSSGHYYT. A helical membrane pass occupies residues 104 to 127; sequence IVTLSVTFLFGYNTGLYLLTAISV. The Cytoplasmic segment spans residues 128–148; the sequence is ERCLSVLYPIWYRCHRPKHQS. The helical transmembrane segment at 149–171 threads the bilayer; it reads AFVCALLWALSCLVTTMEYVMCI. The Extracellular segment spans residues 172-184; it reads DSGEESHSQSDCR. A helical transmembrane segment spans residues 185–205; the sequence is AVIIFIAILSFLVFTPLMLVS. At 206–223 the chain is on the cytoplasmic side; that stretch reads STILVVKIRKNTWASHSS. A helical membrane pass occupies residues 224 to 244; sequence KLYIVIMVTIIIFLIFAMPMR. Over 245–262 the chain is Extracellular; the sequence is VLYLLYYEYWSTFGNLHN. Residues 263–283 traverse the membrane as a helical segment; that stretch reads ISLLFSTINSSANPFIYFFVG. At 284–324 the chain is on the cytoplasmic side; that stretch reads SSKKKRFRESLKVVLTRAFKDEMQPRRQEGNGNTVSIETVV.

Belongs to the G-protein coupled receptor 1 family. Interacts with AGTR1. Interacts with FLNA (via filamin repeat 21); increases PKA-mediated phosphorylation of FLNA. As to expression, expressed in platelets.

The protein resides in the cell membrane. In terms of biological role, receptor for angiotensin 1-7. Acts specifically as a functional antagonist of AGTR1 (angiotensin-2 type 1 receptor), although it up-regulates AGTR1 receptor levels. Positive regulation of AGTR1 levels occurs through activation of the G-proteins GNA11 and GNAQ, and stimulation of the protein kinase C signaling cascade. The antagonist effect on AGTR1 function is probably due to AGTR1 being physically altered by MAS1. In Rattus norvegicus (Rat), this protein is Proto-oncogene Mas (Mas1).